The sequence spans 1391 residues: Enhancer of mRNA-decapping protein 4 (1391 aa).

WD repeat units lie at residues Gly170–Gln210, Ser226–Asn274, Gly292–Pro331, and His340–Thr390. Disordered regions lie at residues Gln703–Gln724 and Asp897–Ser924. A compositionally biased stretch (basic and acidic residues) spans Lys915–Ser924. Positions Glu935–His968 form a coiled coil.

It belongs to the WD repeat EDC4 family.

Its subcellular location is the cytoplasm. It localises to the P-body. The protein localises to the nucleus. Functionally, in the process of mRNA degradation, seems to play a role in mRNA decapping. In Xenopus laevis (African clawed frog), this protein is Enhancer of mRNA-decapping protein 4 (edc4).